Consider the following 398-residue polypeptide: Fatty-acid-binding protein 2 (398 aa).

Arginine 222, tyrosine 235, and serine 302 together coordinate dodecanoate.

It belongs to the chalcone isomerase family. Expressed in developing cotyledons, young seedlings, roots, seeds, embryos, macrospores, preanthesis and tapetum. Restricted to developing and reproductive tissues.

Its subcellular location is the plastid. It localises to the chloroplast stroma. Functionally, fatty-acid-binding protein. Associates with saturated fatty acid. The polypeptide is Fatty-acid-binding protein 2 (FAP2) (Arabidopsis thaliana (Mouse-ear cress)).